We begin with the raw amino-acid sequence, 258 residues long: Deoxyribose-phosphate aldolase 2 (258 aa).

The active-site Proton donor/acceptor is the Asp-102. Lys-165 serves as the catalytic Schiff-base intermediate with acetaldehyde. Lys-199 (proton donor/acceptor) is an active-site residue.

This sequence belongs to the DeoC/FbaB aldolase family. DeoC type 2 subfamily.

The protein localises to the cytoplasm. It carries out the reaction 2-deoxy-D-ribose 5-phosphate = D-glyceraldehyde 3-phosphate + acetaldehyde. The protein operates within carbohydrate degradation; 2-deoxy-D-ribose 1-phosphate degradation; D-glyceraldehyde 3-phosphate and acetaldehyde from 2-deoxy-alpha-D-ribose 1-phosphate: step 2/2. Catalyzes a reversible aldol reaction between acetaldehyde and D-glyceraldehyde 3-phosphate to generate 2-deoxy-D-ribose 5-phosphate. The polypeptide is Deoxyribose-phosphate aldolase 2 (deoC2) (Vibrio vulnificus (strain YJ016)).